A 264-amino-acid chain; its full sequence is Thymidylate synthase (264 aa).

Residue Arg21 coordinates dUMP. His51 serves as a coordination point for (6R)-5,10-methylene-5,6,7,8-tetrahydrofolate. Residue 126–127 coordinates dUMP; it reads RR. Cys146 serves as the catalytic Nucleophile. Residues 166 to 169, Asn177, and 207 to 209 each bind dUMP; these read RSAD and HLY. Asp169 lines the (6R)-5,10-methylene-5,6,7,8-tetrahydrofolate pocket. Ser263 is a (6R)-5,10-methylene-5,6,7,8-tetrahydrofolate binding site.

It belongs to the thymidylate synthase family. Bacterial-type ThyA subfamily. As to quaternary structure, homodimer.

The protein localises to the cytoplasm. The catalysed reaction is dUMP + (6R)-5,10-methylene-5,6,7,8-tetrahydrofolate = 7,8-dihydrofolate + dTMP. The protein operates within pyrimidine metabolism; dTTP biosynthesis. Catalyzes the reductive methylation of 2'-deoxyuridine-5'-monophosphate (dUMP) to 2'-deoxythymidine-5'-monophosphate (dTMP) while utilizing 5,10-methylenetetrahydrofolate (mTHF) as the methyl donor and reductant in the reaction, yielding dihydrofolate (DHF) as a by-product. This enzymatic reaction provides an intracellular de novo source of dTMP, an essential precursor for DNA biosynthesis. The chain is Thymidylate synthase from Neisseria meningitidis serogroup B (strain ATCC BAA-335 / MC58).